A 430-amino-acid polypeptide reads, in one-letter code: Microtubule-associated protein tau (430 aa).

Residues 1–16 are compositionally biased toward basic and acidic residues; the sequence is MAEPRQEFDTAEDHAE. The tract at residues 1 to 245 is disordered; the sequence is MAEPRQEFDT…PVPMPDLKNV (245 aa). Alanine 2 bears the N-acetylalanine mark. Phosphotyrosine is present on tyrosine 18. Lysine 31 is covalently cross-linked (Glycyl lysine isopeptide (Lys-Gly) (interchain with G-Cter in ubiquitin)). Phosphoserine occurs at positions 33 and 48. Positions 48 to 58 are enriched in polar residues; that stretch reads SETSDAKSTPT. Residues threonine 56, threonine 58, and threonine 98 each carry the phosphothreonine modification. Residues 117-133 are compositionally biased toward basic and acidic residues; that stretch reads KGKEGTGSEDRKAKGAD. Threonine 142 carries the post-translational modification Phosphothreonine. Residue arginine 144 is modified to Omega-N-methylarginine. Lysine 152 carries the post-translational modification N6,N6-dimethyllysine; alternate. An N6-acetyllysine; alternate modification is found at lysine 152. 4 positions are modified to phosphothreonine: threonine 158, threonine 164, threonine 165, and threonine 170. Residues 161-203 are compositionally biased toward low complexity; it reads PAKTTPSPKTPPGTGEPAKSGDRSGYSSPGSPGTPGSRSRTPS. 2 positions are modified to phosphoserine: serine 180 and serine 184. At tyrosine 186 the chain carries Phosphotyrosine. A phosphoserine mark is found at serine 187, serine 188, and serine 191. 2 positions are modified to phosphothreonine: threonine 194 and threonine 201. Residue serine 203 is modified to Phosphoserine. Threonine 206 carries the post-translational modification Phosphothreonine. Lysine 214 carries the post-translational modification N6-acetyllysine. Threonine 220 carries the phosphothreonine modification. 2 positions are modified to phosphoserine: serine 224 and serine 226. Tau/MAP repeat units lie at residues 233–263, 264–294, 295–325, and 326–357; these read QTAPVPMPDLKNVRSKIGSTENLKHQPGGGK, VQIINKKLDLSNVQSKCGSKDNIKHVPGGGS, VQIVYKPVDLSKVTSKCGSLGNIHHKPGGGQ, and VEVKSEKLDFKDRVQSKIGSLDNITHVPGGGN. A Glycyl lysine isopeptide (Lys-Gly) (interchain with G-Cter in ubiquitin) cross-link involves residue lysine 243. The residue at position 248 (lysine 248) is an N6-acetyllysine; alternate. An N6-methyllysine; alternate modification is found at lysine 248. Residue lysine 248 forms a Glycyl lysine isopeptide (Lys-Gly) (interchain with G-Cter in ubiquitin); alternate linkage. A Phosphoserine modification is found at serine 251. A Glycyl lysine isopeptide (Lys-Gly) (interchain with G-Cter in ubiquitin) cross-link involves residue lysine 256. Lysine 270 bears the N6-acetyllysine; alternate mark. Residue lysine 270 forms a Glycyl lysine isopeptide (Lys-Gly) (interchain with G-Cter in ubiquitin); alternate linkage. 2 positions are modified to phosphoserine: serine 274 and serine 278. At lysine 279 the chain carries N6-acetyllysine. A disulfide bond links cysteine 280 and cysteine 311. Phosphoserine is present on serine 282. Residue lysine 287 is modified to N6-acetyllysine; alternate. Lysine 287 participates in a covalent cross-link: Glycyl lysine isopeptide (Lys-Gly) (interchain with G-Cter in ubiquitin); alternate. At serine 294 the chain carries Phosphoserine. Lysine 300 carries the N6,N6-dimethyllysine; alternate modification. Residues lysine 300, lysine 306, and lysine 310 each carry the N6-acetyllysine; alternate modification. Glycyl lysine isopeptide (Lys-Gly) (interchain with G-Cter in ubiquitin); alternate cross-links involve residues lysine 300, lysine 306, and lysine 310. Serine 313 bears the Phosphoserine mark. An N6-acetyllysine; alternate mark is found at lysine 320, lysine 332, and lysine 336. Glycyl lysine isopeptide (Lys-Gly) (interchain with G-Cter in ubiquitin); alternate cross-links involve residues lysine 320, lysine 332, and lysine 336. The residue at position 338 (arginine 338) is an Omega-N-methylarginine. Position 341 is a phosphoserine (serine 341). Residue lysine 342 forms a Glycyl lysine isopeptide (Lys-Gly) (interchain with G-Cter in ubiquitin) linkage. At serine 345 the chain carries Phosphoserine. Lysine 358 carries the post-translational modification N6-acetyllysine; alternate. Lysine 358 participates in a covalent cross-link: Glycyl lysine isopeptide (Lys-Gly) (interchain with G-Cter in ubiquitin); alternate. A Glycyl lysine isopeptide (Lys-Gly) (interchain with G-Cter in ubiquitin) cross-link involves residue lysine 364. Lysine 374 carries the N6-acetyllysine; alternate modification. A Glycyl lysine isopeptide (Lys-Gly) (interchain with G-Cter in ubiquitin); alternate cross-link involves residue lysine 374. Tyrosine 383 carries the post-translational modification Phosphotyrosine. Residues serine 385 and serine 389 each carry the phosphoserine modification. Positions 387-406 are disordered; the sequence is VVSGDTSPRHLSNVSSTGSI. The segment covering 390–406 has biased composition (polar residues); it reads GDTSPRHLSNVSSTGSI. Threonine 392 bears the Phosphothreonine mark. A phosphoserine mark is found at serine 393, serine 398, serine 405, and serine 411. The residue at position 416 (threonine 416) is a Phosphothreonine.

Interacts with MARK1, MARK2, MARK3 and MARK4. Interacts with SQSTM1 when polyubiquitinated. Interacts with PSMC2 through SQSTM1. Interacts with FKBP4. Binds to CSNK1D. Interacts with SGK1. Interacts with PIN1. Interacts with LRRK2. Interacts with LRP1, leading to endocytosis; this interaction is reduced in the presence of LRPAP1/RAP. Post-translationally, polyubiquitinated. Requires functional TRAF6 and may provoke SQSTM1-dependent degradation by the proteasome. In terms of processing, phosphorylation at various serine and threonine residues in S-P or T-P motifs by proline-directed protein kinases (PDPK1, CDK1, CDK5, GSK3, MAPK) (a few sites per protein in interphase, more in mitosis), and at serine residues in K-X-G-S motifs by MAP/microtubule affinity-regulating kinase (MARK1, MARK2, MARK3 or MARK4), causing detachment from microtubules, and their disassembly. Phosphorylation at Ser-345 by BRSK1 and BRSK2 in neurons affects ability to bind microtubules and plays a role in neuron polarization. Phosphorylated by PHK. Dephosphorylation at several serine and threonine residues by the serine/threonine phosphatase PPP5C. Hyperphosphorylated (in particular at Thr-170, Ser-191, Thr-194, Ser-251, and Ser-345) during hibernation. Phosphorylation is fully reversible after arousal. Highly phosphorylated tau contains a number of paired helical filaments (PHFs)-like epitopes. PHF-like phosphorylation is not associated with fibril formation. Distribution of PHF-like tau is more intense in the entorhinal cortex, hippocampus and isocortical areas. PHF-like phosphorylation-dephosphorylation during hibernation cycle is synchronized with regression-re-establishment of afferentation. It may reflect a protective mechanism in an unfavorable environment.

Its subcellular location is the cytoplasm. It is found in the cytosol. It localises to the cell membrane. The protein localises to the cytoskeleton. The protein resides in the cell projection. Its subcellular location is the axon. It is found in the dendrite. In terms of biological role, promotes microtubule assembly and stability, and might be involved in the establishment and maintenance of neuronal polarity. The C-terminus binds axonal microtubules while the N-terminus binds neural plasma membrane components, suggesting that tau functions as a linker protein between both. Axonal polarity is predetermined by tau localization (in the neuronal cell) in the domain of the cell body defined by the centrosome. The short isoforms allow plasticity of the cytoskeleton whereas the longer isoforms may preferentially play a role in its stabilization. The protein is Microtubule-associated protein tau (MAPT) of Spermophilus citellus (European ground squirrel).